We begin with the raw amino-acid sequence, 277 residues long: ATP synthase subunit delta (277 aa).

The protein belongs to the ATPase delta chain family. F-type ATPases have 2 components, F(1) - the catalytic core - and F(0) - the membrane proton channel. F(1) has five subunits: alpha(3), beta(3), gamma(1), delta(1), epsilon(1). F(0) has three main subunits: a(1), b(2) and c(10-14). The alpha and beta chains form an alternating ring which encloses part of the gamma chain. F(1) is attached to F(0) by a central stalk formed by the gamma and epsilon chains, while a peripheral stalk is formed by the delta and b chains.

It is found in the cell membrane. In terms of biological role, f(1)F(0) ATP synthase produces ATP from ADP in the presence of a proton or sodium gradient. F-type ATPases consist of two structural domains, F(1) containing the extramembraneous catalytic core and F(0) containing the membrane proton channel, linked together by a central stalk and a peripheral stalk. During catalysis, ATP synthesis in the catalytic domain of F(1) is coupled via a rotary mechanism of the central stalk subunits to proton translocation. Functionally, this protein is part of the stalk that links CF(0) to CF(1). It either transmits conformational changes from CF(0) to CF(1) or is implicated in proton conduction. The sequence is that of ATP synthase subunit delta from Bifidobacterium animalis subsp. lactis (strain AD011).